Reading from the N-terminus, the 667-residue chain is Primary amine oxidase (667 aa).

An N-terminal signal peptide occupies residues 1–18; the sequence is KFALFSVLTLLSFHAVFS. An N-linked (GlcNAc...) asparagine glycan is attached at Asn-149. A disulfide bond links Cys-155 and Cys-176. The interval 216-246 is disordered; the sequence is PTAENTEYQVSKQSPPFGPKQHSLTSHQPQG. Positions 218–229 are enriched in polar residues; it reads AENTEYQVSKQS. Asn-252 carries N-linked (GlcNAc...) asparagine glycosylation. 316-327 lines the substrate pocket; it reads FFDSGEFGFGLS. The active-site Proton acceptor is the Asp-318. Cys-337 and Cys-363 form a disulfide bridge. N-linked (GlcNAc...) asparagine glycosylation is present at Asn-382. Residue 402-407 coordinates substrate; that stretch reads VGNYDN. The Schiff-base intermediate with substrate; via topaquinone role is filled by Tyr-405. Tyr-405 is subject to 2',4',5'-topaquinone. The Cu cation site is built by His-460 and His-462. Mn(2+) is bound by residues Asp-469, Phe-470, and Asp-471. Asn-576 carries N-linked (GlcNAc...) asparagine glycosylation. Mn(2+) is bound by residues Asp-610 and Ile-611. His-621 contributes to the Cu cation binding site.

It belongs to the copper/topaquinone oxidase family. In terms of assembly, homodimer. It depends on Cu cation as a cofactor. Zn(2+) serves as cofactor. Requires L-topaquinone as cofactor. The cofactor is Mn(2+). Glycosylated; contains two carbohydrate chains per monomer. Post-translationally, topaquinone (TPQ) is generated by copper-dependent autoxidation of a specific tyrosyl residue.

The catalysed reaction is a primary methyl amine + O2 + H2O = an aldehyde + H2O2 + NH4(+). The sequence is that of Primary amine oxidase from Lens culinaris (Lentil).